Here is a 414-residue protein sequence, read N- to C-terminus: Zinc metalloproteinase nas-26 (414 aa).

Positions 1–20 are cleaved as a signal peptide; that stretch reads MTSSLVLILAPLALVAIGEA. The propeptide occupies 21–61; it reads AFGNSSKIFEIPGLEVMASDKYPHFTTIETVSRTKVHRHRR. N-linked (GlcNAc...) asparagine glycosylation occurs at Asn-24. A Peptidase M12A domain is found at 62–264; it reads EVIAGQIYDW…AKVINDIYCP (203 aa). Cystine bridges form between Cys-103/Cys-263, Cys-126/Cys-146, Cys-267/Cys-286, Cys-289/Cys-300, Cys-308/Cys-331, and Cys-358/Cys-378. His-154 lines the Zn(2+) pocket. Glu-155 is an active-site residue. The Zn(2+) site is built by His-158 and His-164. The EGF-like domain occupies 251–307; it reads AFLDAKVINDIYCPNACQGRNHLNCLAGGYPDPNNCNVCRCPEGLGGPDCGRLQPSP. The region spanning 308 to 414 is the CUB domain; the sequence is CGGEIHASDQ…RFSLRFRRQA (107 aa).

Requires Zn(2+) as cofactor.

The protein resides in the secreted. Metalloprotease. The protein is Zinc metalloproteinase nas-26 (toh-1) of Caenorhabditis elegans.